We begin with the raw amino-acid sequence, 284 residues long: Hydrogenase expression/formation protein HupQ (284 aa).

The segment at 1-23 (MIGTQSILPPGFGPGSHGEEDRL) is disordered.

Belongs to the HupH/HyaF family.

The protein is Hydrogenase expression/formation protein HupQ (hupQ) of Azotobacter chroococcum mcd 1.